The primary structure comprises 362 residues: UDP-N-acetylglucosamine--N-acetylmuramyl-(pentapeptide) pyrophosphoryl-undecaprenol N-acetylglucosamine transferase (362 aa).

UDP-N-acetyl-alpha-D-glucosamine-binding positions include 15-17 (TGG), asparagine 127, arginine 165, serine 191, isoleucine 247, 266-271 (ALTVSE), and glutamine 292.

It belongs to the glycosyltransferase 28 family. MurG subfamily.

It is found in the cell inner membrane. The enzyme catalyses di-trans,octa-cis-undecaprenyl diphospho-N-acetyl-alpha-D-muramoyl-L-alanyl-D-glutamyl-meso-2,6-diaminopimeloyl-D-alanyl-D-alanine + UDP-N-acetyl-alpha-D-glucosamine = di-trans,octa-cis-undecaprenyl diphospho-[N-acetyl-alpha-D-glucosaminyl-(1-&gt;4)]-N-acetyl-alpha-D-muramoyl-L-alanyl-D-glutamyl-meso-2,6-diaminopimeloyl-D-alanyl-D-alanine + UDP + H(+). It functions in the pathway cell wall biogenesis; peptidoglycan biosynthesis. Functionally, cell wall formation. Catalyzes the transfer of a GlcNAc subunit on undecaprenyl-pyrophosphoryl-MurNAc-pentapeptide (lipid intermediate I) to form undecaprenyl-pyrophosphoryl-MurNAc-(pentapeptide)GlcNAc (lipid intermediate II). This Shewanella baltica (strain OS185) protein is UDP-N-acetylglucosamine--N-acetylmuramyl-(pentapeptide) pyrophosphoryl-undecaprenol N-acetylglucosamine transferase.